The chain runs to 342 residues: Tetraacyldisaccharide 4'-kinase (342 aa).

ATP is bound at residue threonine 68–threonine 75.

This sequence belongs to the LpxK family.

It catalyses the reaction a lipid A disaccharide + ATP = a lipid IVA + ADP + H(+). It participates in glycolipid biosynthesis; lipid IV(A) biosynthesis; lipid IV(A) from (3R)-3-hydroxytetradecanoyl-[acyl-carrier-protein] and UDP-N-acetyl-alpha-D-glucosamine: step 6/6. Transfers the gamma-phosphate of ATP to the 4'-position of a tetraacyldisaccharide 1-phosphate intermediate (termed DS-1-P) to form tetraacyldisaccharide 1,4'-bis-phosphate (lipid IVA). This chain is Tetraacyldisaccharide 4'-kinase, found in Burkholderia lata (strain ATCC 17760 / DSM 23089 / LMG 22485 / NCIMB 9086 / R18194 / 383).